We begin with the raw amino-acid sequence, 216 residues long: UPF0548 protein (216 aa).

It belongs to the UPF0548 family.

The polypeptide is UPF0548 protein (Dictyostelium discoideum (Social amoeba)).